Here is a 149-residue protein sequence, read N- to C-terminus: Macrodomain Ter protein (149 aa).

It belongs to the MatP family. In terms of assembly, homodimer.

The protein resides in the cytoplasm. Required for spatial organization of the terminus region of the chromosome (Ter macrodomain) during the cell cycle. Prevents early segregation of duplicated Ter macrodomains during cell division. Binds specifically to matS, which is a 13 bp signature motif repeated within the Ter macrodomain. The chain is Macrodomain Ter protein from Vibrio vulnificus (strain YJ016).